The chain runs to 166 residues: Interferon gamma (166 aa).

The first 23 residues, 1–23 (MKYTSYILAFQLCIVLGSLGCYC), serve as a signal peptide directing secretion. Residue Q24 is modified to Pyrrolidone carboxylic acid. Residues N48, N86, and N120 are each glycosylated (N-linked (GlcNAc...) asparagine).

It belongs to the type II (or gamma) interferon family. Homodimer. Interacts with IFNGR1 (via extracellular domain); this interaction promotes IFNGR1 dimerization. As to expression, released primarily from activated T lymphocytes.

It is found in the secreted. Functionally, type II interferon produced by immune cells such as T-cells and NK cells that plays crucial roles in antimicrobial, antiviral, and antitumor responses by activating effector immune cells and enhancing antigen presentation. Primarily signals through the JAK-STAT pathway after interaction with its receptor IFNGR1 to affect gene regulation. Upon IFNG binding, IFNGR1 intracellular domain opens out to allow association of downstream signaling components JAK2, JAK1 and STAT1, leading to STAT1 activation, nuclear translocation and transcription of IFNG-regulated genes. Many of the induced genes are transcription factors such as IRF1 that are able to further drive regulation of a next wave of transcription. Plays a role in class I antigen presentation pathway by inducing a replacement of catalytic proteasome subunits with immunoproteasome subunits. In turn, increases the quantity, quality, and repertoire of peptides for class I MHC loading. Increases the efficiency of peptide generation also by inducing the expression of activator PA28 that associates with the proteasome and alters its proteolytic cleavage preference. Up-regulates as well MHC II complexes on the cell surface by promoting expression of several key molecules such as cathepsins B/CTSB, H/CTSH, and L/CTSL. Participates in the regulation of hematopoietic stem cells during development and under homeostatic conditions by affecting their development, quiescence, and differentiation. The protein is Interferon gamma (IFNG) of Saimiri sciureus (Common squirrel monkey).